The chain runs to 349 residues: Glycosyltransferase 8 domain-containing protein 2 (349 aa).

Over 1-6 the chain is Cytoplasmic; it reads MALLRK. A helical; Signal-anchor for type II membrane protein membrane pass occupies residues 7–24; sequence INQVLLFLLIVTLCVILY. Topologically, residues 25 to 349 are lumenal; that stretch reads KKVHKGTVSK…AGIFKLNHHS (325 aa). The N-linked (GlcNAc...) asparagine glycan is linked to N234.

It belongs to the glycosyltransferase 8 family.

The protein resides in the membrane. This Macaca fascicularis (Crab-eating macaque) protein is Glycosyltransferase 8 domain-containing protein 2 (GLT8D2).